Consider the following 288-residue polypeptide: uncharacterized protein (288 aa).

The helical transmembrane segment at L92–I112 threads the bilayer. Residues D121 to A183 are disordered. 2 stretches are compositionally biased toward basic and acidic residues: residues S136–L146 and S154–I181. The stretch at K147–G185 forms a coiled coil.

It is found in the cell membrane. This is an uncharacterized protein from Bacillus subtilis (strain 168).